We begin with the raw amino-acid sequence, 445 residues long: Neuropeptide Y receptor type 5 (445 aa).

Over Met-1 to Tyr-42 the chain is Extracellular. N-linked (GlcNAc...) asparagine glycans are attached at residues Asn-10 and Asn-17. A helical transmembrane segment spans residues Phe-43–Leu-63. The Cytoplasmic portion of the chain corresponds to Met-64–Asn-77. A helical membrane pass occupies residues Phe-78–Thr-98. The Extracellular portion of the chain corresponds to Leu-99 to Met-117. Residues Cys-114 and Cys-198 are joined by a disulfide bond. Residues Pro-118–Val-138 traverse the membrane as a helical segment. Residues Arg-139–Gly-156 are Cytoplasmic-facing. Residues Tyr-157–Phe-177 traverse the membrane as a helical segment. The Extracellular segment spans residues His-178–Arg-208. The chain crosses the membrane as a helical span at residues Ile-209 to Val-229. The Cytoplasmic portion of the chain corresponds to Ser-230 to Arg-369. A helical transmembrane segment spans residues Leu-370–Val-390. At Thr-391–Tyr-407 the chain is on the extracellular side. A helical membrane pass occupies residues Cys-408–Leu-428. At Asn-429 to Met-445 the chain is on the cytoplasmic side. Cys-442 is lipidated: S-palmitoyl cysteine.

This sequence belongs to the G-protein coupled receptor 1 family. Brain; hypothalamus.

The protein localises to the cell membrane. Functionally, receptor for neuropeptide Y and peptide YY. The activity of this receptor is mediated by G proteins that inhibit adenylate cyclase activity. Seems to be associated with food intake. Could be involved in feeding disorders. The chain is Neuropeptide Y receptor type 5 (NPY5R) from Homo sapiens (Human).